Consider the following 107-residue polypeptide: Large ribosomal subunit protein uL24 (107 aa).

This sequence belongs to the universal ribosomal protein uL24 family. In terms of assembly, part of the 50S ribosomal subunit.

In terms of biological role, one of two assembly initiator proteins, it binds directly to the 5'-end of the 23S rRNA, where it nucleates assembly of the 50S subunit. Functionally, one of the proteins that surrounds the polypeptide exit tunnel on the outside of the subunit. In Neisseria meningitidis serogroup C (strain 053442), this protein is Large ribosomal subunit protein uL24.